We begin with the raw amino-acid sequence, 335 residues long: tRNA-dihydrouridine(20/20a) synthase (335 aa).

FMN is bound by residues 20–22 (PML) and Gln72. Residue Cys102 is the Proton donor of the active site. Residues Lys141, His173, 213–215 (NGG), and 235–236 (GR) each bind FMN.

The protein belongs to the Dus family. DusA subfamily. Requires FMN as cofactor.

The catalysed reaction is 5,6-dihydrouridine(20) in tRNA + NADP(+) = uridine(20) in tRNA + NADPH + H(+). It catalyses the reaction 5,6-dihydrouridine(20) in tRNA + NAD(+) = uridine(20) in tRNA + NADH + H(+). The enzyme catalyses 5,6-dihydrouridine(20a) in tRNA + NADP(+) = uridine(20a) in tRNA + NADPH + H(+). It carries out the reaction 5,6-dihydrouridine(20a) in tRNA + NAD(+) = uridine(20a) in tRNA + NADH + H(+). In terms of biological role, catalyzes the synthesis of 5,6-dihydrouridine (D), a modified base found in the D-loop of most tRNAs, via the reduction of the C5-C6 double bond in target uridines. Specifically modifies U20 and U20a in tRNAs. This is tRNA-dihydrouridine(20/20a) synthase from Shewanella oneidensis (strain ATCC 700550 / JCM 31522 / CIP 106686 / LMG 19005 / NCIMB 14063 / MR-1).